Reading from the N-terminus, the 337-residue chain is Protein-arginine kinase (337 aa).

Residues 8–239 (VVLSSRIRLA…KQIISSERRA (232 aa)) enclose the Phosphagen kinase C-terminal domain. ATP contacts are provided by residues 11-15 (SSRIR), His-76, Arg-110, 161-165 (RASVM), and 192-197 (RGIYGE). Residues 321 to 326 (RDVKRA) carry the RDXXRA motif of the pArg binding pocket involved in allosteric regulation motif.

It belongs to the ATP:guanido phosphotransferase family.

The catalysed reaction is L-arginyl-[protein] + ATP = N(omega)-phospho-L-arginyl-[protein] + ADP + H(+). With respect to regulation, appears to be allosterically activated by the binding of pArg-containing polypeptides to the pArg-binding pocket localized in the C-terminal domain of McsB. Its function is as follows. Catalyzes the specific phosphorylation of arginine residues in proteins. In Caldanaerobacter subterraneus subsp. tengcongensis (strain DSM 15242 / JCM 11007 / NBRC 100824 / MB4) (Thermoanaerobacter tengcongensis), this protein is Protein-arginine kinase.